Reading from the N-terminus, the 87-residue chain is Large ribosomal subunit protein bL31B (87 aa).

This sequence belongs to the bacterial ribosomal protein bL31 family. Type B subfamily. Part of the 50S ribosomal subunit.

This Ralstonia nicotianae (strain ATCC BAA-1114 / GMI1000) (Ralstonia solanacearum) protein is Large ribosomal subunit protein bL31B.